Here is a 508-residue protein sequence, read N- to C-terminus: Steroid 17-alpha-hydroxylase/17,20 lyase (508 aa).

Asparagine 202 contributes to the substrate binding site. A heme-binding site is contributed by cysteine 442.

Belongs to the cytochrome P450 family. Requires heme as cofactor. In terms of processing, phosphorylation is necessary for 17,20-lyase, but not for 17-alpha-hydroxylase activity.

The protein resides in the endoplasmic reticulum membrane. It is found in the microsome membrane. It carries out the reaction a C21-steroid + reduced [NADPH--hemoprotein reductase] + O2 = a 17alpha-hydroxy-C21-steroid + oxidized [NADPH--hemoprotein reductase] + H2O + H(+). The catalysed reaction is progesterone + reduced [NADPH--hemoprotein reductase] + O2 = 17alpha-hydroxyprogesterone + oxidized [NADPH--hemoprotein reductase] + H2O + H(+). The enzyme catalyses pregnenolone + reduced [NADPH--hemoprotein reductase] + O2 = 17alpha-hydroxypregnenolone + oxidized [NADPH--hemoprotein reductase] + H2O + H(+). It catalyses the reaction 17alpha-hydroxyprogesterone + reduced [NADPH--hemoprotein reductase] + O2 = androst-4-ene-3,17-dione + acetate + oxidized [NADPH--hemoprotein reductase] + H2O + 2 H(+). It carries out the reaction 17alpha-hydroxyprogesterone + reduced [NADPH--hemoprotein reductase] + O2 = 16alpha,17alpha-dihydroxyprogesterone + oxidized [NADPH--hemoprotein reductase] + H2O + H(+). The catalysed reaction is 16alpha,17alpha-dihydroxyprogesterone + reduced [NADPH--hemoprotein reductase] + O2 = 6beta,16alpha,17alpha-trihydroxyprogesterone + oxidized [NADPH--hemoprotein reductase] + H2O + H(+). The enzyme catalyses 17alpha-hydroxypregnenolone + reduced [NADPH--hemoprotein reductase] + O2 = 3beta-hydroxyandrost-5-en-17-one + acetate + oxidized [NADPH--hemoprotein reductase] + H2O + 2 H(+). It catalyses the reaction 16alpha,17alpha-dihydroxypregnenolone + reduced [NADPH--hemoprotein reductase] + O2 = 3beta,16alpha-dihydroxy-androst-5-en-17-one + acetate + oxidized [NADPH--hemoprotein reductase] + H2O + 2 H(+). It carries out the reaction 3beta-hydroxyandrost-5-en-17-one + reduced [NADPH--hemoprotein reductase] + O2 = 3beta,16alpha-dihydroxy-androst-5-en-17-one + oxidized [NADPH--hemoprotein reductase] + H2O + H(+). The catalysed reaction is androst-4-ene-3,17-dione + reduced [NADPH--hemoprotein reductase] + O2 = 16alpha-hydroxyandrost-4-ene-3,17-dione + oxidized [NADPH--hemoprotein reductase] + H2O + H(+). The protein operates within steroid hormone biosynthesis. It functions in the pathway steroid biosynthesis; glucocorticoid biosynthesis. Its activity is regulated as follows. Regulated predominantly by intracellular cAMP levels. The 17,20-lyase activity is stimulated by cytochrome b5, which acts as an allosteric effector increasing the Vmax of the lyase activity. In terms of biological role, a cytochrome P450 monooxygenase involved in corticoid and androgen biosynthesis. Catalyzes 17-alpha hydroxylation of C21 steroids, which is common for both pathways. A second oxidative step, required only for androgen synthesis, involves an acyl-carbon cleavage. The 17-alpha hydroxy intermediates, as part of adrenal glucocorticoids biosynthesis pathway, are precursors of cortisol. Hydroxylates steroid hormones, pregnenolone and progesterone to form 17-alpha hydroxy metabolites, followed by the cleavage of the C17-C20 bond to form C19 steroids, dehydroepiandrosterone (DHEA) and androstenedione. Has 16-alpha hydroxylase activity. Catalyzes 16-alpha hydroxylation of 17-alpha hydroxy pregnenolone, followed by the cleavage of the C17-C20 bond to form 16-alpha-hydroxy DHEA. Also 16-alpha hydroxylates androgens, relevant for estriol synthesis. Mechanistically, uses molecular oxygen inserting one oxygen atom into a substrate, and reducing the second into a water molecule, with two electrons provided by NADPH via cytochrome P450 reductase (CPR; NADPH-ferrihemoprotein reductase). This Homo sapiens (Human) protein is Steroid 17-alpha-hydroxylase/17,20 lyase.